Reading from the N-terminus, the 522-residue chain is Ribonuclease Y (522 aa).

A helical membrane pass occupies residues 7–23 (SGSSAAVISGLVGFYIS). Positions 212-278 (LTNLVHLNDD…TKTLELLIQD (67 aa)) constitute a KH domain. One can recognise an HD domain in the interval 338–431 (ALSHTLEVAH…VCAADALSAA (94 aa)).

This sequence belongs to the RNase Y family.

The protein localises to the cell membrane. Functionally, endoribonuclease that initiates mRNA decay. The sequence is that of Ribonuclease Y from Sulfurimonas denitrificans (strain ATCC 33889 / DSM 1251) (Thiomicrospira denitrificans (strain ATCC 33889 / DSM 1251)).